An 88-amino-acid polypeptide reads, in one-letter code: Large ribosomal subunit protein bL27 (88 aa).

Positions 1–23 (MAHKKAGGSSRNGRDSAGRRLGV) are disordered.

It belongs to the bacterial ribosomal protein bL27 family.

This is Large ribosomal subunit protein bL27 from Methylorubrum populi (strain ATCC BAA-705 / NCIMB 13946 / BJ001) (Methylobacterium populi).